Consider the following 123-residue polypeptide: Fluoride-specific ion channel FluC (123 aa).

4 helical membrane-spanning segments follow: residues 1–21 (MLEI…RYLM), 32–52 (ILSL…GLVI), 64–84 (IGLL…SFSY), and 99–119 (FGYT…GIYL). Na(+) contacts are provided by Gly-74 and Thr-77.

Belongs to the fluoride channel Fluc/FEX (TC 1.A.43) family.

Its subcellular location is the cell inner membrane. It catalyses the reaction fluoride(in) = fluoride(out). With respect to regulation, na(+) is not transported, but it plays an essential structural role and its presence is essential for fluoride channel function. Functionally, fluoride-specific ion channel. Important for reducing fluoride concentration in the cell, thus reducing its toxicity. This is Fluoride-specific ion channel FluC from Gloeothece citriformis (strain PCC 7424) (Cyanothece sp. (strain PCC 7424)).